The sequence spans 706 residues: Triadin (706 aa).

Residues 1–28 (MTEITAEGNASTTTTVIDSKNGSVPKSP) are disordered. The Cytoplasmic segment spans residues 1–47 (MTEITAEGNASTTTTVIDSKNGSVPKSPGKVLKRTVTEDLVTTFSSP). A compositionally biased stretch (polar residues) spans 8-24 (GNASTTTTVIDSKNGSV). A helical transmembrane segment spans residues 48–68 (AAWLLVIALIITWSAVAVVMF). The Lumenal portion of the chain corresponds to 69-706 (DLVDYKNFSA…GKPNSPGPKQ (638 aa)). Asn-75 carries an N-linked (GlcNAc...) asparagine glycan. Residues 117–127 (DGDEEDDEGDE) are compositionally biased toward acidic residues. 3 disordered regions span residues 117-265 (DGDE…EQKD), 281-663 (DLKP…KKQK), and 684-706 (FPVTPAQYPGESSGKPNSPGPKQ). Composition is skewed to basic and acidic residues over residues 128–254 (DTAK…ESKE), 309–358 (PEEK…KSPD), 372–432 (TKKD…KEEV), 443–518 (AKKE…EVKP), 525–552 (IKKEEKPEQDIMKPEKTALHGKPEEKVL), 570–588 (KKAEHQEKEPPSIKTDKPK), and 599–621 (ESGKKKIEKSEKEIKVPARRESH). An N-linked (GlcNAc...) asparagine glycan is attached at Asn-625. The segment covering 628–651 (KAEKPARGSKEGFEDVPASKKAKE) has biased composition (basic and acidic residues).

Interacts with CASQ2. Homooligomer of variable subunit number; disulfide-linked. Interacts with CASQ1 and RYR1 in skeletal muscle. Post-translationally, phosphorylated by CaMK2. N-glycosylated. In terms of tissue distribution, detected in skeletal muscle and in heart (at protein level). Detected in skeletal muscle and in heart.

It localises to the sarcoplasmic reticulum membrane. Contributes to the regulation of lumenal Ca2+ release via the sarcoplasmic reticulum calcium release channels RYR1 and RYR2, a key step in triggering skeletal and heart muscle contraction. Required for normal organization of the triad junction, where T-tubules and the sarcoplasmic reticulum terminal cisternae are in close contact. Required for normal skeletal muscle strength. Plays a role in excitation-contraction coupling in the heart and in regulating the rate of heart beats. In Oryctolagus cuniculus (Rabbit), this protein is Triadin (TRDN).